Consider the following 293-residue polypeptide: Acetylglutamate kinase (293 aa).

Residues 65 to 66, arginine 87, and asparagine 180 each bind substrate; that span reads GG.

It belongs to the acetylglutamate kinase family. ArgB subfamily.

The protein resides in the cytoplasm. The enzyme catalyses N-acetyl-L-glutamate + ATP = N-acetyl-L-glutamyl 5-phosphate + ADP. Its pathway is amino-acid biosynthesis; L-arginine biosynthesis; N(2)-acetyl-L-ornithine from L-glutamate: step 2/4. In terms of biological role, catalyzes the ATP-dependent phosphorylation of N-acetyl-L-glutamate. This chain is Acetylglutamate kinase, found in Cereibacter sphaeroides (strain ATCC 17029 / ATH 2.4.9) (Rhodobacter sphaeroides).